Reading from the N-terminus, the 607-residue chain is DNA mismatch repair protein MutL (607 aa).

It belongs to the DNA mismatch repair MutL/HexB family.

Its function is as follows. This protein is involved in the repair of mismatches in DNA. It is required for dam-dependent methyl-directed DNA mismatch repair. May act as a 'molecular matchmaker', a protein that promotes the formation of a stable complex between two or more DNA-binding proteins in an ATP-dependent manner without itself being part of a final effector complex. The polypeptide is DNA mismatch repair protein MutL (Anaeromyxobacter sp. (strain K)).